A 205-amino-acid polypeptide reads, in one-letter code: Cytochrome c oxidase subunit 3 (205 aa).

The next 5 helical transmembrane spans lie at 29 to 49 (TIVF…MYFV), 72 to 92 (ALLI…GVFA), 104 to 124 (WFLV…YEYI), 142 to 162 (FFIT…AFVV), and 184 to 204 (SYYW…IYFI).

In terms of assembly, associates with subunits I, II and IV to form cytochrome c oxidase. The 4 subunit cytochrome c oxidase forms a supercomplex with the menaquinol-cytochrome c reductase complex (cytochrome bc1).

The protein resides in the cell membrane. It carries out the reaction 4 Fe(II)-[cytochrome c] + O2 + 8 H(+)(in) = 4 Fe(III)-[cytochrome c] + 2 H2O + 4 H(+)(out). In Corynebacterium glutamicum (strain ATCC 13032 / DSM 20300 / JCM 1318 / BCRC 11384 / CCUG 27702 / LMG 3730 / NBRC 12168 / NCIMB 10025 / NRRL B-2784 / 534), this protein is Cytochrome c oxidase subunit 3 (ctaE).